We begin with the raw amino-acid sequence, 180 residues long: p-cumate 2,3-dioxygenase system, small oxygenase component (180 aa).

This sequence belongs to the bacterial ring-hydroxylating dioxygenase beta subunit family. As to quaternary structure, the p-cumate 2,3-dioxygenase multicomponent enzyme system is composed of an electron transfer component and a dioxygenase component (iron sulfur protein (ISP)). The electron transfer component is composed of a ferredoxin reductase (CmtAa) and a ferredoxin (CmtAd), and the dioxygenase component is formed of a large alpha subunit (CmtAb) and a small beta subunit (CmtAc).

Its pathway is aromatic compound metabolism; p-cumate degradation; acetaldehyde and pyruvate from p-cumate. Its function is as follows. Component of the p-cumate 2,3-dioxygenase multicomponent enzyme system which catalyzes the incorporation of both atoms of molecular oxygen into p-cumate to form cis-2,3-dihydroxy-2,3-dihydro-p-cumate. The beta subunit seems to have a structural role in the holoenzyme. Also able to catalyze the cis-dihydroxylation of indole-2-carboxylate and indole-3-carboxylate. The polypeptide is p-cumate 2,3-dioxygenase system, small oxygenase component (Pseudomonas putida (Arthrobacter siderocapsulatus)).